Reading from the N-terminus, the 224-residue chain is uncharacterized protein (224 aa).

This is an uncharacterized protein from Saccharomyces cerevisiae (strain ATCC 204508 / S288c) (Baker's yeast).